A 469-amino-acid chain; its full sequence is Swarming motility regulation sensor protein RssA (469 aa).

2 helical membrane-spanning segments follow: residues 12-32 (IIFQ…WVKY) and 167-187 (VPLL…AYFS). Positions 245-459 (DAAHELRTPI…GFIIDLPESY (215 aa)) constitute a Histidine kinase domain. H248 is subject to Phosphohistidine; by autocatalysis.

It localises to the cell inner membrane. The enzyme catalyses ATP + protein L-histidine = ADP + protein N-phospho-L-histidine.. Functionally, member of the two-component regulatory system RssA/RssB involved in regulation of swarming motility which has been shown to be inhibited by saturated fatty acids. RssA/RssB regulates cellular fatty acid composition, hemolysin production and cell surface topography. RssA/RssB negatively regulates the activity of SlhBA. It can also act as a negative regulator for the control of the swarming initiation. The sequence is that of Swarming motility regulation sensor protein RssA (rssA) from Serratia marcescens.